A 393-amino-acid chain; its full sequence is Trehalose import ATP-binding protein SugC (393 aa).

Residues 4–235 (IVLDHVNKSY…PANLFVAGFI (232 aa)) enclose the ABC transporter domain. Residue 37–44 (GPSGCGKT) participates in ATP binding. The Helical C-loop; LSGGQ motif signature appears at 135–139 (LSGGQ).

This sequence belongs to the ABC transporter superfamily. Monomer. Homodimerizes in the presence of ATP. The complex is composed of two ATP-binding proteins (SugC), two transmembrane proteins (SugA and SugB) and a solute-binding protein (LpqY).

It is found in the cell inner membrane. It catalyses the reaction alpha,alpha-trehalose(out) + ATP + H2O = alpha,alpha-trehalose(in) + ADP + phosphate + H(+). Part of the ABC transporter complex LpqY-SugA-SugB-SugC, which is highly specific for uptake of trehalose. Involved in the recycling of extracellular trehalose released from trehalose-containing molecules synthesized by M.tuberculosis. Trehalose uptake is essential for virulence. Responsible for energy coupling to the transport system. This Mycobacterium tuberculosis (strain CDC 1551 / Oshkosh) protein is Trehalose import ATP-binding protein SugC (sugC).